We begin with the raw amino-acid sequence, 940 residues long: Valine--tRNA ligase (940 aa).

The short motif at 47–57 (PNVTGILHMGH) is the 'HIGH' region element. Positions 564–568 (KLSKS) match the 'KMSKS' region motif. Residue lysine 567 coordinates ATP. The stretch at 872-938 (PMEHITKERN…LQSILDKLAS (67 aa)) forms a coiled coil.

It belongs to the class-I aminoacyl-tRNA synthetase family. ValS type 1 subfamily. In terms of assembly, monomer.

The protein localises to the cytoplasm. It catalyses the reaction tRNA(Val) + L-valine + ATP = L-valyl-tRNA(Val) + AMP + diphosphate. Functionally, catalyzes the attachment of valine to tRNA(Val). As ValRS can inadvertently accommodate and process structurally similar amino acids such as threonine, to avoid such errors, it has a 'posttransfer' editing activity that hydrolyzes mischarged Thr-tRNA(Val) in a tRNA-dependent manner. This is Valine--tRNA ligase from Chlamydia caviae (strain ATCC VR-813 / DSM 19441 / 03DC25 / GPIC) (Chlamydophila caviae).